Reading from the N-terminus, the 285-residue chain is (3S)-malyl-CoA thioesterase (285 aa).

Positions 70 and 122 each coordinate substrate. Mg(2+) contacts are provided by Glu-122 and Asp-148.

The protein belongs to the HpcH/HpaI aldolase family. Homodimer or homotrimer. Mg(2+) serves as cofactor.

It catalyses the reaction (S)-malyl-CoA + H2O = (S)-malate + CoA + H(+). Functionally, catalyzes the hydrolysis of (3S)-malyl-CoA to (3S)-malate and free CoA. Inactive towards beta-methylmalyl-CoA and other CoA esters. The protein is (3S)-malyl-CoA thioesterase of Cereibacter sphaeroides (strain KD131 / KCTC 12085) (Rhodobacter sphaeroides).